The primary structure comprises 269 residues: JmjC domain-containing protein 8 (269 aa).

The signal sequence occupies residues 1–24 (MAAAGRFGLLLLIVLWTMVTVVLP). 3 N-linked (GlcNAc...) asparagine glycosylation sites follow: Asn-135, Asn-145, and Asn-214. A JmjC domain is found at 147–269 (TEWAPLFQHY…TSVFISTFLG (123 aa)).

Oligomer. Dimer. Interacts with PKM; regulates angiogenesis and metabolism. N-glycosylated.

It localises to the endoplasmic reticulum lumen. Its subcellular location is the cytoplasm. Functionally, functions as a positive regulator of TNF-induced NF-kappaB signaling. Regulates angiogenesis and cellular metabolism through interaction with PKM. The chain is JmjC domain-containing protein 8 from Rattus norvegicus (Rat).